The following is a 134-amino-acid chain: ATP synthase epsilon chain (134 aa).

The protein belongs to the ATPase epsilon chain family. In terms of assembly, F-type ATPases have 2 components, CF(1) - the catalytic core - and CF(0) - the membrane proton channel. CF(1) has five subunits: alpha(3), beta(3), gamma(1), delta(1), epsilon(1). CF(0) has three main subunits: a, b and c.

The protein localises to the cellular thylakoid membrane. In terms of biological role, produces ATP from ADP in the presence of a proton gradient across the membrane. The chain is ATP synthase epsilon chain from Prochlorococcus marinus (strain MIT 9215).